The sequence spans 181 residues: Acireductone dioxygenase 2 (181 aa).

Residues His-97, His-99, Glu-103, and His-141 each contribute to the Fe(2+) site. Positions 97, 99, 103, and 141 each coordinate Ni(2+).

It belongs to the acireductone dioxygenase (ARD) family. In terms of assembly, monomer. Fe(2+) serves as cofactor. Ni(2+) is required as a cofactor.

The enzyme catalyses 1,2-dihydroxy-5-(methylsulfanyl)pent-1-en-3-one + O2 = 3-(methylsulfanyl)propanoate + CO + formate + 2 H(+). The catalysed reaction is 1,2-dihydroxy-5-(methylsulfanyl)pent-1-en-3-one + O2 = 4-methylsulfanyl-2-oxobutanoate + formate + 2 H(+). Its pathway is amino-acid biosynthesis; L-methionine biosynthesis via salvage pathway; L-methionine from S-methyl-5-thio-alpha-D-ribose 1-phosphate: step 5/6. Catalyzes 2 different reactions between oxygen and the acireductone 1,2-dihydroxy-3-keto-5-methylthiopentene (DHK-MTPene) depending upon the metal bound in the active site. Fe-containing acireductone dioxygenase (Fe-ARD) produces formate and 2-keto-4-methylthiobutyrate (KMTB), the alpha-ketoacid precursor of methionine in the methionine recycle pathway. Ni-containing acireductone dioxygenase (Ni-ARD) produces methylthiopropionate, carbon monoxide and formate, and does not lie on the methionine recycle pathway. This chain is Acireductone dioxygenase 2, found in Pectobacterium atrosepticum (strain SCRI 1043 / ATCC BAA-672) (Erwinia carotovora subsp. atroseptica).